Here is a 626-residue protein sequence, read N- to C-terminus: Putative ankyrin repeat protein L768 (626 aa).

5 ANK repeats span residues 217–246, 333–362, 421–451, 515–545, and 547–571; these read NLYDVFKYACSRGKLHIIDYLLDKRIEYDF, DLDMIIVMAIEFNSMELINWCMNNGININK, TAENIIHNIIENRPHIEILKYLLTEVQTEHI, SNLKILFVTIMTDNIDILEFLLEINKYNQDY, and QWALIFSSNNITILEYIINNTNVNP.

The polypeptide is Putative ankyrin repeat protein L768 (Acanthamoeba polyphaga mimivirus (APMV)).